A 244-amino-acid chain; its full sequence is Type III pantothenate kinase (244 aa).

8 to 15 (DQGNSACK) is a binding site for ATP. 94–97 (GADR) is a substrate binding site. D96 serves as the catalytic Proton acceptor. Residue D117 coordinates K(+). T120 serves as a coordination point for ATP. T175 is a binding site for substrate.

Belongs to the type III pantothenate kinase family. Homodimer. The cofactor is NH4(+). It depends on K(+) as a cofactor.

It is found in the cytoplasm. The catalysed reaction is (R)-pantothenate + ATP = (R)-4'-phosphopantothenate + ADP + H(+). It functions in the pathway cofactor biosynthesis; coenzyme A biosynthesis; CoA from (R)-pantothenate: step 1/5. In terms of biological role, catalyzes the phosphorylation of pantothenate (Pan), the first step in CoA biosynthesis. The chain is Type III pantothenate kinase from Porphyromonas gingivalis (strain ATCC 33277 / DSM 20709 / CIP 103683 / JCM 12257 / NCTC 11834 / 2561).